Here is a 91-residue protein sequence, read N- to C-terminus: Acylphosphatase (91 aa).

The Acylphosphatase-like domain occupies 5-91 (WKKWNVRGVV…QEYKDFHVEF (87 aa)). Residues Arg20 and Asn38 contribute to the active site.

The protein belongs to the acylphosphatase family.

It carries out the reaction an acyl phosphate + H2O = a carboxylate + phosphate + H(+). This chain is Acylphosphatase (acyP), found in Fervidobacterium nodosum (strain ATCC 35602 / DSM 5306 / Rt17-B1).